A 551-amino-acid chain; its full sequence is Hydroxylamine reductase (551 aa).

[2Fe-2S] cluster-binding residues include cysteine 3, cysteine 6, cysteine 18, and cysteine 25. Histidine 249, glutamate 273, cysteine 317, cysteine 405, cysteine 433, cysteine 459, glutamate 493, and lysine 495 together coordinate hybrid [4Fe-2O-2S] cluster. A Cysteine persulfide modification is found at cysteine 405.

Belongs to the HCP family. [2Fe-2S] cluster is required as a cofactor. Requires hybrid [4Fe-2O-2S] cluster as cofactor.

The protein resides in the cytoplasm. The enzyme catalyses A + NH4(+) + H2O = hydroxylamine + AH2 + H(+). Functionally, catalyzes the reduction of hydroxylamine to form NH(3) and H(2)O. The sequence is that of Hydroxylamine reductase from Actinobacillus pleuropneumoniae serotype 5b (strain L20).